The primary structure comprises 254 residues: Tryptophan synthase alpha chain (254 aa).

Catalysis depends on proton acceptor residues glutamate 48 and aspartate 59.

The protein belongs to the TrpA family. In terms of assembly, tetramer of two alpha and two beta chains.

The catalysed reaction is (1S,2R)-1-C-(indol-3-yl)glycerol 3-phosphate + L-serine = D-glyceraldehyde 3-phosphate + L-tryptophan + H2O. The protein operates within amino-acid biosynthesis; L-tryptophan biosynthesis; L-tryptophan from chorismate: step 5/5. The alpha subunit is responsible for the aldol cleavage of indoleglycerol phosphate to indole and glyceraldehyde 3-phosphate. In Desulfotalea psychrophila (strain LSv54 / DSM 12343), this protein is Tryptophan synthase alpha chain.